The chain runs to 37 residues: ATP synthase subunit O, mitochondrial (37 aa).

The protein belongs to the ATPase delta chain family. In terms of assembly, F-type ATPases have 2 components, CF(1) - the catalytic core - and CF(0) - the membrane proton channel. CF(1) has five subunits: alpha(3), beta(3), gamma(1), delta(1), epsilon(1). CF(0) has three main subunits: a, b and c.

It is found in the mitochondrion. The protein resides in the mitochondrion inner membrane. Mitochondrial membrane ATP synthase (F(1)F(0) ATP synthase or Complex V) produces ATP from ADP in the presence of a proton gradient across the membrane which is generated by electron transport complexes of the respiratory chain. F-type ATPases consist of two structural domains, F(1) - containing the extramembraneous catalytic core and F(0) - containing the membrane proton channel, linked together by a central stalk and a peripheral stalk. During catalysis, ATP synthesis in the catalytic domain of F(1) is coupled via a rotary mechanism of the central stalk subunits to proton translocation. Part of the complex F(0) domain and the peripheric stalk, which acts as a stator to hold the catalytic alpha(3)beta(3) subcomplex and subunit a/ATP6 static relative to the rotary elements. This chain is ATP synthase subunit O, mitochondrial, found in Solanum tuberosum (Potato).